Here is a 405-residue protein sequence, read N- to C-terminus: Saccharopepsin (405 aa).

An N-terminal signal peptide occupies residues 1–22; it reads MFSLKALLPLALLLVSANQVAA. The propeptide at 23 to 76 is activation peptide; that stretch reads KVHKAKIYKHELSDEMKEVTFEQHLAHLGQKYLTQFEKANPEVVFSREHPFFTE. The 312-residue stretch at 91 to 402 folds into the Peptidase A1 domain; sequence YYTDITLGTP…DLGNNAVGLA (312 aa). Aspartate 109 is an active-site residue. A disulfide bond links cysteine 122 and cysteine 127. Asparagine 144 is a glycosylation site (N-linked (GlcNAc...) asparagine). The active site involves aspartate 294. Cysteines 328 and 361 form a disulfide. N-linked (GlcNAc...) asparagine glycosylation is present at asparagine 345.

This sequence belongs to the peptidase A1 family.

It is found in the vacuole. It catalyses the reaction Hydrolysis of proteins with broad specificity for peptide bonds. Cleaves -Leu-Leu-|-Val-Tyr- bond in a synthetic substrate. Does not act on esters of Tyr or Arg.. Its function is as follows. Aspartyl protease implicated in the post-translational regulation of S.cerevisiae vacuolar proteinases. Acts on YSCB, on YSCY and on itself. This chain is Saccharopepsin (PEP4), found in Saccharomyces cerevisiae (strain ATCC 204508 / S288c) (Baker's yeast).